The following is a 491-amino-acid chain: Mitochondrial MYO2 receptor-related protein 1 (491 aa).

Phosphothreonine is present on threonine 12. Phosphoserine occurs at positions 16 and 37. The stretch at 295–384 (NAEEANSREK…CKKVLKKLTE (90 aa)) forms a coiled coil. Positions 300-439 (NSREKSNLDI…GTSSEEDHLT (140 aa)) are interaction with MYO2. The segment at 419–491 (KKIEEQPDSS…LPVQVEKKEK (73 aa)) is disordered. The span at 461–472 (SAISTTASVQSG) shows a compositional bias: polar residues.

In terms of assembly, interacts with MYO2 and PCL7. Post-translationally, phosphorylated by the cyclin-CDK PCL7-PHO85.

The protein resides in the bud tip. It localises to the bud neck. The protein localises to the mitochondrion outer membrane. Involved in the guiding of mitochondrial tubules to the bud tip during cell division. In Saccharomyces cerevisiae (strain ATCC 204508 / S288c) (Baker's yeast), this protein is Mitochondrial MYO2 receptor-related protein 1 (MMR1).